We begin with the raw amino-acid sequence, 132 residues long: MKAIRANIPRALPTGARLVCADNTGARELEIIAVKGYKGVRRRYPAAGVGDIVVVTVKKGTPEIRKQVHYAVIVRQRKEYRRPDGTRVKFEDNAAVITNERGEPRGSEIRGAVAREAAERFSKIGTIASVIV.

The protein belongs to the universal ribosomal protein uL14 family. As to quaternary structure, part of the 50S ribosomal subunit. Forms a cluster with proteins L3 and L24e, part of which may contact the 16S rRNA in 2 intersubunit bridges.

Functionally, binds to 23S rRNA. Forms part of two intersubunit bridges in the 70S ribosome. This Archaeoglobus fulgidus (strain ATCC 49558 / DSM 4304 / JCM 9628 / NBRC 100126 / VC-16) protein is Large ribosomal subunit protein uL14.